The primary structure comprises 252 residues: Insulin-induced gene 1 protein (252 aa).

The Cytoplasmic portion of the chain corresponds to 1–59 (MPRLESGAWSCSCAARARHAARPGEAAPKADAMQSPSPSAGRAEREASGGSATTWRQHL). The interval 22–48 (RPGEAAPKADAMQSPSPSAGRAEREAS) is disordered. The helical transmembrane segment at 60–82 (VQRSVVLFVVGAFMALVLNLLQI) threads the bilayer. At 83 to 101 (QRNVTLFPDEVIATLFSSA) the chain is on the extracellular side. A helical transmembrane segment spans residues 102–119 (WWVPPCCGTAAAVVGLLY). Over 120 to 134 (PCIDSHLGEPHKFKR) the chain is Cytoplasmic. Residues 135–157 (EWASVMRCIAVFVGINHASAKLD) form a helical membrane-spanning segment. Residues 158–160 (FAN) are Extracellular-facing. Residues 161 to 179 (NVQLSLTLAALSLGLWWTF) traverse the membrane as a helical segment. The Cytoplasmic portion of the chain corresponds to 180–184 (DRSRS). Residues 185–206 (GLGLGITIAFVATLITQFLVYN) traverse the membrane as a helical segment. At 207 to 220 (GVYQYTSPDFLYIR) the chain is on the extracellular side. A helical membrane pass occupies residues 221–238 (SWLPCIFFSGGVTVGNIG). Over 239–252 (RQLAMGIPEKPHND) the chain is Cytoplasmic. The short motif at 246 to 252 (PEKPHND) is the KxHxx element.

Belongs to the INSIG family. As to quaternary structure, interacts with SCAP; interaction is direct and only takes place in the presence of sterols; it prevents interaction between SCAP and the coat protein complex II (COPII). Associates with the SCAP-SREBP complex; association is mediated via its interaction with SCAP and only takes place in the presence of sterols.

Its subcellular location is the endoplasmic reticulum membrane. Oxysterol-binding protein that mediates feedback control of cholesterol synthesis by controlling both endoplasmic reticulum to Golgi transport of SCAP and degradation of HMGCR. Acts as a negative regulator of cholesterol biosynthesis by mediating the retention of the SCAP-SREBP complex in the endoplasmic reticulum, thereby blocking the processing of sterol regulatory element-binding proteins (SREBPs). Binds oxysterol, including 25-hydroxycholesterol, regulating interaction with SCAP and retention of the SCAP-SREBP complex in the endoplasmic reticulum. In presence of oxysterol, interacts with SCAP, retaining the SCAP-SREBP complex in the endoplasmic reticulum, thereby preventing SCAP from escorting SREBPs to the Golgi. Sterol deprivation reduces oxysterol-binding, disrupting the interaction between INSIG1 and SCAP, thereby promoting Golgi transport of the SCAP-SREBP complex, followed by processing and nuclear translocation of SREBPs. Also regulates cholesterol synthesis by regulating degradation of HMGCR. The protein is Insulin-induced gene 1 protein of Gallus gallus (Chicken).